The chain runs to 448 residues: Tubulin alpha chain (448 aa).

The GTP site is built by Gln12, Glu73, Ser142, Gly146, Thr147, Thr181, Asn208, and Asn230. Glu73 serves as a coordination point for Mg(2+). Glu256 is an active-site residue.

The protein belongs to the tubulin family. As to quaternary structure, dimer of alpha and beta chains. A typical microtubule is a hollow water-filled tube with an outer diameter of 25 nm and an inner diameter of 15 nM. Alpha-beta heterodimers associate head-to-tail to form protofilaments running lengthwise along the microtubule wall with the beta-tubulin subunit facing the microtubule plus end conferring a structural polarity. Microtubules usually have 13 protofilaments but different protofilament numbers can be found in some organisms and specialized cells. The cofactor is Mg(2+).

The protein resides in the cytoplasm. Its subcellular location is the cytoskeleton. It catalyses the reaction GTP + H2O = GDP + phosphate + H(+). Functionally, tubulin is the major constituent of microtubules, a cylinder consisting of laterally associated linear protofilaments composed of alpha- and beta-tubulin heterodimers. Microtubules grow by the addition of GTP-tubulin dimers to the microtubule end, where a stabilizing cap forms. Below the cap, tubulin dimers are in GDP-bound state, owing to GTPase activity of alpha-tubulin. This chain is Tubulin alpha chain (TUB1), found in Eremothecium gossypii (strain ATCC 10895 / CBS 109.51 / FGSC 9923 / NRRL Y-1056) (Yeast).